The following is a 98-amino-acid chain: NADH-ubiquinone oxidoreductase chain 4L (98 aa).

3 helical membrane passes run 1–21 (MSMV…GLLM), 29–49 (SLLC…VTIL), and 61–81 (IILL…LVMV).

This sequence belongs to the complex I subunit 4L family. As to quaternary structure, core subunit of respiratory chain NADH dehydrogenase (Complex I) which is composed of 45 different subunits.

It is found in the mitochondrion inner membrane. It carries out the reaction a ubiquinone + NADH + 5 H(+)(in) = a ubiquinol + NAD(+) + 4 H(+)(out). In terms of biological role, core subunit of the mitochondrial membrane respiratory chain NADH dehydrogenase (Complex I) which catalyzes electron transfer from NADH through the respiratory chain, using ubiquinone as an electron acceptor. Part of the enzyme membrane arm which is embedded in the lipid bilayer and involved in proton translocation. This Halichoerus grypus (Gray seal) protein is NADH-ubiquinone oxidoreductase chain 4L (MT-ND4L).